The chain runs to 150 residues: Peptide deformylase 1 (150 aa).

Positions 88 and 130 each coordinate Fe cation. Residue Glu-131 is part of the active site. His-134 lines the Fe cation pocket.

This sequence belongs to the polypeptide deformylase family. The cofactor is Fe(2+).

It carries out the reaction N-terminal N-formyl-L-methionyl-[peptide] + H2O = N-terminal L-methionyl-[peptide] + formate. In terms of biological role, removes the formyl group from the N-terminal Met of newly synthesized proteins. Requires at least a dipeptide for an efficient rate of reaction. N-terminal L-methionine is a prerequisite for activity but the enzyme has broad specificity at other positions. The polypeptide is Peptide deformylase 1 (Clostridium acetobutylicum (strain ATCC 824 / DSM 792 / JCM 1419 / IAM 19013 / LMG 5710 / NBRC 13948 / NRRL B-527 / VKM B-1787 / 2291 / W)).